The primary structure comprises 72 residues: Translation initiation factor IF-1 (72 aa).

In terms of domain architecture, S1-like spans 1 to 72; it reads MAKDDVIVVD…DKGRITHRYK (72 aa).

Belongs to the IF-1 family. As to quaternary structure, component of the 30S ribosomal translation pre-initiation complex which assembles on the 30S ribosome in the order IF-2 and IF-3, IF-1 and N-formylmethionyl-tRNA(fMet); mRNA recruitment can occur at any time during PIC assembly.

The protein resides in the cytoplasm. In terms of biological role, one of the essential components for the initiation of protein synthesis. Stabilizes the binding of IF-2 and IF-3 on the 30S subunit to which N-formylmethionyl-tRNA(fMet) subsequently binds. Helps modulate mRNA selection, yielding the 30S pre-initiation complex (PIC). Upon addition of the 50S ribosomal subunit IF-1, IF-2 and IF-3 are released leaving the mature 70S translation initiation complex. This chain is Translation initiation factor IF-1, found in Aliarcobacter butzleri (strain RM4018) (Arcobacter butzleri).